A 211-amino-acid polypeptide reads, in one-letter code: Beta-crystallin B3 (211 aa).

Met-1 is modified (N-acetylmethionine). Position 2 is an N-acetylalanine; in Beta-crystallin B3, N-terminally processed (Ala-2). The tract at residues 2–23 (AEQHGAPEQAAAGKSHGGLGGS) is N-terminal arm. 2 consecutive Beta/gamma crystallin 'Greek key' domains span residues 24–63 (YKVTVYELENFQGKRCELSAECPNLTDSLLEKVGSIQVES) and 64–108 (GPWL…RPLH). The connecting peptide stretch occupies residues 109-113 (IDGPD). 2 consecutive Beta/gamma crystallin 'Greek key' domains span residues 114-155 (HKLH…RVIN) and 156-198 (GTWV…RRIR). The segment at 200–211 (QKWHKRGCFLSS) is C-terminal arm.

Belongs to the beta/gamma-crystallin family. In terms of assembly, homo/heterodimer, or complexes of higher-order. The structure of beta-crystallin oligomers seems to be stabilized through interactions between the N-terminal arms.

Its function is as follows. Crystallins are the dominant structural components of the vertebrate eye lens. The polypeptide is Beta-crystallin B3 (Crybb3) (Mus musculus (Mouse)).